Here is a 153-residue protein sequence, read N- to C-terminus: Large ribosomal subunit protein uL13 (153 aa).

It belongs to the universal ribosomal protein uL13 family. In terms of assembly, part of the 50S ribosomal subunit.

In terms of biological role, this protein is one of the early assembly proteins of the 50S ribosomal subunit, although it is not seen to bind rRNA by itself. It is important during the early stages of 50S assembly. In Azorhizobium caulinodans (strain ATCC 43989 / DSM 5975 / JCM 20966 / LMG 6465 / NBRC 14845 / NCIMB 13405 / ORS 571), this protein is Large ribosomal subunit protein uL13.